A 498-amino-acid polypeptide reads, in one-letter code: Cytochrome P450 monooxygenase apdB (498 aa).

A helical transmembrane segment spans residues 20–40 (ASPQVFKLFVLILFVLLVLKI). C457 lines the heme pocket.

Belongs to the cytochrome P450 family. Requires heme as cofactor.

It localises to the membrane. It participates in secondary metabolite biosynthesis. Functionally, cytochrome P450 monooxygenase; part of the gene cluster that mediates the biosynthesis of aspyridones. The polyketide-amino acid backbone preaspyridone A is first assembled by the PKS-NRPS hybrid apdA. The assembly of preaspyridone A is initiated by loading of malonyl-CoA onto apdA, followed by decarboxylation to yield the acetyl starter unit. The growing polyketide chain then elongates into a tetraketide. The adpA PKS module catalyzes three Claisen condensations, as well as beta-keto processing and methylation. Alpha-methylation step during polyketide synthesis is a prerequisite and a key checkpoint for chain transfer between PKS and NRPS modules. The downstream NRPS module contains the condensation (C), adenylation (A), and thiolation (T) domains and catalyzes the incorporation of tyrosine via the formation of the L-tyrosinyl-thioester and the amide linkage between L-tyrosinyl-thioester and the tetraketide. The bimodular assembly line is terminated with a reductase (R) domain that facilitates formation and release of the tetramic acid product. Because apdA lacks a designated enoylreductase (ER) domain, the required activity is provided the enoyl reductase apdC. ApdC appears to operate with different stereoselectivity in different PKS cycle. Combined with apdC, apdA is proposed to synthesize preaspyridone A via about 20 enzymatic steps. A number of oxidative steps performed successively by the cytochrome P450 monooxygenases apdE and apdB are required for the conversion of preaspyridone A to aspyridone A. The cytochrome P450 monooxygenase apdE is responsible for the oxidative dephenylation of preaspyridone A. Finally, the predicted FAD-dependent monooxygenase apdD and the acyl-CoA dehydrogenase apdG may be involved in the transformation of aspyridone A into aspyridone B. This is Cytochrome P450 monooxygenase apdB from Emericella nidulans (strain FGSC A4 / ATCC 38163 / CBS 112.46 / NRRL 194 / M139) (Aspergillus nidulans).